The primary structure comprises 594 residues: Nucleolar protein 56 (594 aa).

Glycyl lysine isopeptide (Lys-Gly) (interchain with G-Cter in SUMO2) cross-links involve residues Lys-87, Lys-230, and Lys-240. A Nop domain is found at 292–410; it reads VAPSLSALIG…VEERLSFYET (119 aa). A Phosphoserine modification is found at Ser-314. At Arg-359 the chain carries Omega-N-methylarginine. Low complexity-rich tracts occupy residues 458–469 and 488–504; these read ALASSENSSSTP and QEVPQENGMEDPSISFS. A disordered region spans residues 458–594; that stretch reads ALASSENSSS…KKFHKASQED (137 aa). Residues Ser-466 and Ser-467 each carry the phosphoserine modification. Thr-468 is subject to Phosphothreonine. 4 positions are modified to phosphoserine: Ser-511, Ser-519, Ser-520, and Ser-537. Residue Lys-540 forms a Glycyl lysine isopeptide (Lys-Gly) (interchain with G-Cter in SUMO2) linkage. Lys-561 is subject to N6-acetyllysine. The residue at position 563 (Ser-563) is a Phosphoserine. A Glycyl lysine isopeptide (Lys-Gly) (interchain with G-Cter in SUMO2) cross-link involves residue Lys-564. Phosphoserine occurs at positions 569, 570, 579, and 581. Residues 580-594 are compositionally biased toward basic residues; it reads SSKKKKKFHKASQED.

Belongs to the NOP5/NOP56 family. In terms of assembly, part of a large pre-ribosomal ribonucleoprotein (RNP) complex, that consists of at least 62 ribosomal proteins, 45 nonribosomal proteins and both pre-rRNA and mature rRNA species. Within this complex directly interacts with TCOF1 in an RNA-independent manner. Core component of box C/D small nucleolar ribonucleoprotein (snoRNP) particles; the core proteins SNU13, NOP56, NOP58 and FBL or FBLL1 assemble stepwise onto the snoRNA. Interacts with NOP1 and NOP58. Interacts with NUFIP1, RUVBL1 and RUVBL2; RUVBL1:RUVBL2 seem to bridge the association of NOP56 with NUFIP1. Part of the small subunit (SSU) processome, composed of more than 70 proteins and the RNA chaperone small nucleolar RNA (snoRNA) U3. Interacts with NOP2 and FBL.

It is found in the nucleus. The protein resides in the nucleolus. Its subcellular location is the cytoplasm. The protein localises to the nucleoplasm. Functionally, involved in the early to middle stages of 60S ribosomal subunit biogenesis. Required for the biogenesis of box C/D snoRNAs such U3, U8 and U14 snoRNAs. Part of the small subunit (SSU) processome, first precursor of the small eukaryotic ribosomal subunit. During the assembly of the SSU processome in the nucleolus, many ribosome biogenesis factors, an RNA chaperone and ribosomal proteins associate with the nascent pre-rRNA and work in concert to generate RNA folding, modifications, rearrangements and cleavage as well as targeted degradation of pre-ribosomal RNA by the RNA exosome. Core component of box C/D small nucleolar ribonucleoprotein (snoRNP) complexes that function in methylation of multiple sites on ribosomal RNAs (rRNAs) and messenger RNAs (mRNAs). The protein is Nucleolar protein 56 of Homo sapiens (Human).